The chain runs to 479 residues: Cyclic AMP-responsive element-binding protein 3-like protein 3 (479 aa).

Residues 1–317 (MDGDIAAGKM…QSTSKPAHAG (317 aa)) lie on the Cytoplasmic side of the membrane. The interval 67-144 (CILGPGDSDP…CPEPPRTQVQ (78 aa)) is disordered. The segment covering 98–110 (PQDTPPRSGTEPA) has biased composition (polar residues). A bZIP domain is found at 239 to 302 (VLKKIRRKIR…LSLLEQLKHL (64 aa)). Residues 241-270 (KKIRRKIRNKQSAQESRKKKKEYIDGLENR) form a basic motif region. The leucine-zipper stretch occupies residues 281–302 (LQRKVLHLEKQNLSLLEQLKHL). A Glycyl lysine isopeptide (Lys-Gly) (interchain with G-Cter in ubiquitin) cross-link involves residue Lys-290. Residues 318-338 (TCIAVLLLSFALIILPSISPF) form a helical; Signal-anchor for type II membrane protein membrane-spanning segment. Residues 339-479 (NSNKVDSPGD…RLVQDALGVL (141 aa)) are Lumenal-facing. N-linked (GlcNAc...) asparagine glycosylation is found at Asn-411, Asn-418, and Asn-425.

This sequence belongs to the bZIP family. ATF subfamily. Binds DNA as a dimer. May form homodimers. Interacts with ATF6. Interacts with SYNV1/HRD1; this interaction leads to CREB3L3 ubiquitination and proteasomal degradation. Following ER stress a fragment containing the cytoplasmic transcription factor domain is released by proteolysis. The cleavage seems to be performed sequentially by site-1 and site-2 proteases. In terms of processing, N-glycosylation is required for optimal proteolytic activation. Post-translationally, ubiquitinated at Lys-290 by SYNV1/HRD1 via 'Lys-27'-linked ubiquitin. Expressed in adult liver (at protein level) and small intestine.

It is found in the endoplasmic reticulum membrane. Its subcellular location is the nucleus. Transcription factor that may act during endoplasmic reticulum (ER) stress by activating unfolded protein response target genes. Activated in response to cAMP stimulation. Binds to the cAMP response element (CRE). Activates transcription through box-B element. Activates transcription through CRE. May function synergistically with ATF6. In acute inflammatory response, may activate expression of acute phase response (APR) genes. May be involved in growth suppression. Regulates FGF21 transcription. Plays a crucial role in the regulation of triglyceride metabolism and is required for the maintenance of normal plasma triglyceride concentrations. The polypeptide is Cyclic AMP-responsive element-binding protein 3-like protein 3 (Creb3l3) (Mus musculus (Mouse)).